Reading from the N-terminus, the 81-residue chain is Cytotoxin 4a (81 aa).

The first 21 residues, 1 to 21 (MKTLLLTLVVVTIVCLDLGYT), serve as a signal peptide directing secretion. 4 disulfide bridges follow: cysteine 24-cysteine 42, cysteine 35-cysteine 59, cysteine 63-cysteine 74, and cysteine 75-cysteine 80.

The protein belongs to the three-finger toxin family. Short-chain subfamily. Type IA cytotoxin sub-subfamily. As to quaternary structure, monomer in solution; Homodimer and oligomer in the presence of negatively charged lipids forming a pore with a size ranging between 20 and 30 Angstroms. Expressed by the venom gland.

It localises to the secreted. Its subcellular location is the target cell membrane. Shows cytolytic activity on many different cells by forming pore in lipid membranes. In vivo, increases heart rate or kills the animal by cardiac arrest. In addition, it binds to heparin with high affinity, interacts with Kv channel-interacting protein 1 (KCNIP1) in a calcium-independent manner, and binds to integrin alpha-V/beta-3 (ITGAV/ITGB3) with moderate affinity. The protein is Cytotoxin 4a of Naja sputatrix (Malayan spitting cobra).